The primary structure comprises 549 residues: Glucose-6-phosphate isomerase (549 aa).

Glu355 serves as the catalytic Proton donor. Residues His386 and Lys514 contribute to the active site.

It belongs to the GPI family.

It is found in the cytoplasm. The enzyme catalyses alpha-D-glucose 6-phosphate = beta-D-fructose 6-phosphate. It participates in carbohydrate biosynthesis; gluconeogenesis. Its pathway is carbohydrate degradation; glycolysis; D-glyceraldehyde 3-phosphate and glycerone phosphate from D-glucose: step 2/4. In terms of biological role, catalyzes the reversible isomerization of glucose-6-phosphate to fructose-6-phosphate. The polypeptide is Glucose-6-phosphate isomerase (Desulfatibacillum aliphaticivorans).